Here is a 199-residue protein sequence, read N- to C-terminus: 7-methyl-GTP pyrophosphatase (199 aa).

Asp-76 acts as the Proton acceptor in catalysis.

The protein belongs to the Maf family. YceF subfamily. It depends on a divalent metal cation as a cofactor.

Its subcellular location is the cytoplasm. It carries out the reaction N(7)-methyl-GTP + H2O = N(7)-methyl-GMP + diphosphate + H(+). Its function is as follows. Nucleoside triphosphate pyrophosphatase that hydrolyzes 7-methyl-GTP (m(7)GTP). May have a dual role in cell division arrest and in preventing the incorporation of modified nucleotides into cellular nucleic acids. The polypeptide is 7-methyl-GTP pyrophosphatase (Hahella chejuensis (strain KCTC 2396)).